We begin with the raw amino-acid sequence, 586 residues long: SPbeta prophage-derived uncharacterized protein YorA (586 aa).

PbH1 repeat units follow at residues 108–147 (AENV…HVHG), 148–170 (SKNV…WIAA), 184–206 (SKSV…ATNG), 207–235 (CEGL…DLEG), 246–268 (PYEL…TAHT), 288–313 (STDV…DSVG), 320–341 (GNRI…MIRG), 364–384 (AEDV…QIQV), 387–410 (SSDI…KVMD), 411–432 (SNDV…YCER), 435–456 (AVRI…YWDK), 481–504 (MYNI…HLIG), and 505–531 (GSEH…YLNG).

In Bacillus subtilis (strain 168), this protein is SPbeta prophage-derived uncharacterized protein YorA (yorA).